We begin with the raw amino-acid sequence, 426 residues long: Glutamate-1-semialdehyde 2,1-aminomutase (426 aa).

K265 carries the N6-(pyridoxal phosphate)lysine modification.

It belongs to the class-III pyridoxal-phosphate-dependent aminotransferase family. HemL subfamily. Homodimer. Requires pyridoxal 5'-phosphate as cofactor.

It is found in the cytoplasm. The enzyme catalyses (S)-4-amino-5-oxopentanoate = 5-aminolevulinate. Its pathway is porphyrin-containing compound metabolism; protoporphyrin-IX biosynthesis; 5-aminolevulinate from L-glutamyl-tRNA(Glu): step 2/2. This Erwinia tasmaniensis (strain DSM 17950 / CFBP 7177 / CIP 109463 / NCPPB 4357 / Et1/99) protein is Glutamate-1-semialdehyde 2,1-aminomutase.